A 545-amino-acid polypeptide reads, in one-letter code: Sulfite oxidase, mitochondrial (545 aa).

The N-terminal 79 residues, 1-79 (MLLLHRAVVL…YQDHRCRAAQ (79 aa)), are a transit peptide targeting the mitochondrion. The Cytochrome b5 heme-binding domain occupies 82-161 (THIYTKEEVS…LAQYKIGELN (80 aa)). Heme b is bound at residue H118. S123 carries the post-translational modification Phosphoserine. Positions 143, 145, and 147 each coordinate heme b. A hinge region spans residues 165–174 (KVAPTVETSD). The moco domain stretch occupies residues 175–401 (PYADDPVRHP…YSHWQRRDYK (227 aa)). Mo-molybdopterin contacts are provided by residues 215–219 (FTRNH), C264, D322, H361, R366, and 377–379 (HVK). Residues 402–538 (GFSPSVDWET…RGVLSNAWHR (137 aa)) are homodimerization.

Homodimer. Heme b is required as a cofactor. The cofactor is Mo-molybdopterin.

It is found in the mitochondrion intermembrane space. The catalysed reaction is sulfite + O2 + H2O = sulfate + H2O2. It participates in energy metabolism; sulfur metabolism. Functionally, catalyzes the oxidation of sulfite to sulfate, the terminal reaction in the oxidative degradation of sulfur-containing amino acids. This is Sulfite oxidase, mitochondrial (SUOX) from Homo sapiens (Human).